Consider the following 904-residue polypeptide: Copper-transporting ATPase ccc2 (904 aa).

Residues 1–172 are Cytoplasmic-facing; the sequence is MYTTTLSVQG…GSQIRVWKIR (172 aa). The HMA domain occupies 2 to 68; that stretch reads YTTTLSVQGM…KIEDCGFDAS (67 aa). The Cu(+) site is built by cysteine 13 and cysteine 16. The chain crosses the membrane as a helical span at residues 173–193; it reads FIISISFSLAVMFLPQIFDSC. Residues 194–197 are Lumenal, vesicle-facing; the sequence is DSMR. The helical transmembrane segment at 198-218 threads the bilayer; the sequence is AAFLVPHYFGICAGHIISLVL. The Cytoplasmic segment spans residues 219–246; the sequence is SLPVQFGVGRVYYSAAYHALKRGTANMD. Residues 247 to 267 form a helical membrane-spanning segment; sequence VLVSLGSTVAFAASIFFMILY. Topologically, residues 268–278 are lumenal, vesicle; that stretch reads SARHADNPAPI. The helical transmembrane segment at 279-296 threads the bilayer; sequence FFDTADMLLTFVTLGRYL. Residues 297–431 are Cytoplasmic-facing; it reads ESKAKGSTSA…PIQQFADRVA (135 aa). The chain crosses the membrane as a helical span at residues 432 to 452; it reads GIFVPVIVALSISTFTFWFLF. Over 453 to 469 the chain is Lumenal, vesicle; the sequence is TKYSSKYPSVFDDPMGK. The helical transmembrane segment at 470 to 490 threads the bilayer; that stretch reads FAVCLKLTISVVVVACPCALG. The Cytoplasmic portion of the chain corresponds to 491 to 805; the sequence is LSTPTAVMVG…RIKMNLVWAC (315 aa). Residue aspartate 529 is the 4-aspartylphosphate intermediate of the active site. Mg(2+) contacts are provided by aspartate 742 and aspartate 746. The helical transmembrane segment at 806-826 threads the bilayer; the sequence is IYNFVMIPIAMGFFLPWGIYL. Residues 827–828 are Lumenal, vesicle-facing; it reads NP. The chain crosses the membrane as a helical span at residues 829–849; the sequence is MWASAAMMFSSLSVLASSLLL. Topologically, residues 850-904 are cytoplasmic; sequence RRWKKPKSLIFSEADDVETESSTNSSVLQKVYTATRSIFGRNKSSNKYQPVANEV.

It belongs to the cation transport ATPase (P-type) (TC 3.A.3) family. Type IB subfamily.

It localises to the golgi apparatus. It is found in the trans-Golgi network membrane. The catalysed reaction is Cu(+)(in) + ATP + H2O = Cu(+)(out) + ADP + phosphate + H(+). Probably involved in copper transport and in the regulation of cellular copper level. Retrieves copper from the metallochaperone atx1 and incorporates it into trans-Golgi vesicles. This chain is Copper-transporting ATPase ccc2 (ccc2), found in Schizosaccharomyces pombe (strain 972 / ATCC 24843) (Fission yeast).